A 278-amino-acid polypeptide reads, in one-letter code: Lipoyl-[GcvH]:protein N-lipoyltransferase (278 aa).

The BPL/LPL catalytic domain occupies 44 to 250 (RMAPSTVRGW…SLRHYAGDLV (207 aa)). Catalysis depends on C149, which acts as the Acyl-thioester intermediate.

This sequence belongs to the octanoyltransferase LipL family.

The catalysed reaction is N(6)-[(R)-lipoyl]-L-lysyl-[glycine-cleavage complex H protein] + L-lysyl-[lipoyl-carrier protein] = L-lysyl-[glycine-cleavage complex H protein] + N(6)-[(R)-lipoyl]-L-lysyl-[lipoyl-carrier protein]. The protein operates within protein modification; protein lipoylation via exogenous pathway. Functionally, catalyzes the amidotransfer (transamidation) of the lipoyl moiety from lipoyl-GcvH to the lipoyl domain of the E2 subunit of lipoate-dependent enzymes. Takes part in a pathway for scavenging of lipoic acid derived from eukaryotic host cells. Cannot use lipoyl-tripeptide (DK(L)A), lipoamide (LD), or free lipoate as substrate. In Listeria monocytogenes serovar 1/2a (strain ATCC BAA-679 / EGD-e), this protein is Lipoyl-[GcvH]:protein N-lipoyltransferase.